The chain runs to 177 residues: Coatomer subunit zeta-1 (177 aa).

Residue Met1 is modified to N-acetylmethionine.

The protein belongs to the adaptor complexes small subunit family. Oligomeric complex that consists of at least the alpha, beta, beta', gamma, delta, epsilon and zeta subunits.

It localises to the cytoplasm. Its subcellular location is the golgi apparatus membrane. It is found in the cytoplasmic vesicle. The protein resides in the COPI-coated vesicle membrane. The coatomer is a cytosolic protein complex that binds to dilysine motifs and reversibly associates with Golgi non-clathrin-coated vesicles, which further mediate biosynthetic protein transport from the ER, via the Golgi up to the trans Golgi network. Coatomer complex is required for budding from Golgi membranes, and is essential for the retrograde Golgi-to-ER transport of dilysine-tagged proteins. The zeta subunit may be involved in regulating the coat assembly and, hence, the rate of biosynthetic protein transport due to its association-dissociation properties with the coatomer complex. This Bos taurus (Bovine) protein is Coatomer subunit zeta-1 (COPZ1).